Here is a 213-residue protein sequence, read N- to C-terminus: A-type ATP synthase subunit D (213 aa).

The protein belongs to the V-ATPase D subunit family. As to quaternary structure, has multiple subunits with at least A(3), B(3), C, D, E, F, H, I and proteolipid K(x).

It is found in the cell membrane. Functionally, component of the A-type ATP synthase that produces ATP from ADP in the presence of a proton gradient across the membrane. This chain is A-type ATP synthase subunit D, found in Thermoplasma acidophilum (strain ATCC 25905 / DSM 1728 / JCM 9062 / NBRC 15155 / AMRC-C165).